A 446-amino-acid polypeptide reads, in one-letter code: Inward rectifier potassium channel 4 (446 aa).

Over Met1 to Trp55 the chain is Cytoplasmic. Residues Arg56–Ile80 form a helical membrane-spanning segment. Residues Ala81–Gly120 are Extracellular-facing. A val/Gly/Ala/Pro stretch region spans residues Pro91 to Ala111. Positions Phe121–Gln132 form an intramembrane region, helical; Pore-forming. The pore-forming intramembrane region spans Thr133 to Phe139. Positions Thr134 to Phe139 match the Selectivity filter motif. The Extracellular segment spans residues Arg140–Leu148. A helical membrane pass occupies residues Ala149–Thr170. Over Ile171–Ile446 the chain is Cytoplasmic. The short motif at Ser444–Ile446 is the PDZ-binding element.

This sequence belongs to the inward rectifier-type potassium channel (TC 1.A.2.1) family. KCNJ4 subfamily. In terms of assembly, homomultimeric and heteromultimeric association with KCNJ2 and KCNJ12. Interacts with DLG2 and DLG4. Associates, via its PDZ-recognition domain, with a complex containing LIN7A, LIN7B, LIN7C, DLG1, CASK and APBA1. Interacts with TAX1BP3. TAX1BP3 competes with LIN7 family members for KCNJ4 binding. As to expression, detected in kidney distal convoluted tubules (at protein level). Widely expressed throughout the brain. Also found in some peripheral tissues.

The protein resides in the cell membrane. It is found in the cytoplasmic vesicle membrane. The protein localises to the postsynaptic cell membrane. It carries out the reaction K(+)(in) = K(+)(out). Inward rectifier potassium channels are characterized by a greater tendency to allow potassium to flow into the cell rather than out of it. Their voltage dependence is regulated by the concentration of extracellular potassium; as external potassium is raised, the voltage range of the channel opening shifts to more positive voltages. The inward rectification is mainly due to the blockage of outward current by internal magnesium. Can be blocked by extracellular barium and cesium. The chain is Inward rectifier potassium channel 4 (Kcnj4) from Rattus norvegicus (Rat).